Here is a 687-residue protein sequence, read N- to C-terminus: Transcription activator of gluconeogenesis SNOG_12336 (687 aa).

The interval 1 to 56 (MASPDAEDASPSPEYRSDLDDDMAAEQKTDDGSPSQKSSNGQKPASNAKDPLRPRR) is disordered. The segment covering 32-45 (GSPSQKSSNGQKPA) has biased composition (polar residues). Positions 63-91 (CFACQRAHLTCGDERPCTRCIKRGLQDHC) form a DNA-binding region, zn(2)-C6 fungal-type. Composition is skewed to polar residues over residues 150–159 (PSGTFYQPPS) and 169–179 (HGRSFSDQQSP). 3 disordered regions span residues 150–214 (PSGT…GPLF), 300–411 (ESQS…KRHR), and 536–561 (GNSR…GQEA). A compositionally biased stretch (low complexity) spans 195–212 (PPSSISQGQPGQMQQFGP). Residues 300–318 (ESQSRQNSMHIHTPTSSAT) show a composition bias toward polar residues. The segment covering 342-357 (PSSHSTASPASTDASA) has biased composition (low complexity). Polar residues-rich tracts occupy residues 362–384 (NPLS…SPTT), 392–402 (RPPSTALQPIH), and 546–561 (MSTQ…GQEA). One can recognise a PAS domain in the interval 482 to 553 (NLMTLQDHFT…SEMSTQTNTT (72 aa)).

It belongs to the ERT1/acuK family.

The protein resides in the nucleus. Its function is as follows. Transcription factor which regulates nonfermentable carbon utilization. Activator of gluconeogenetic genes. This chain is Transcription activator of gluconeogenesis SNOG_12336, found in Phaeosphaeria nodorum (strain SN15 / ATCC MYA-4574 / FGSC 10173) (Glume blotch fungus).